A 180-amino-acid chain; its full sequence is Hypoxanthine-guanine phosphoribosyltransferase (180 aa).

Residues Lys43 and Gly44 each contribute to the diphosphate site. Mg(2+) is bound by residues Glu99 and Asp100. The Proton acceptor role is filled by Asp103. Residues Lys131, Phe152–Val153, and Asp159 each bind GMP. Arg165 is a binding site for diphosphate.

Belongs to the purine/pyrimidine phosphoribosyltransferase family. It depends on Mg(2+) as a cofactor.

Its subcellular location is the cytoplasm. The enzyme catalyses IMP + diphosphate = hypoxanthine + 5-phospho-alpha-D-ribose 1-diphosphate. The catalysed reaction is GMP + diphosphate = guanine + 5-phospho-alpha-D-ribose 1-diphosphate. Its pathway is purine metabolism; IMP biosynthesis via salvage pathway; IMP from hypoxanthine: step 1/1. The protein operates within purine metabolism; GMP biosynthesis via salvage pathway; GMP from guanine: step 1/1. Functionally, purine salvage pathway enzyme that catalyzes the transfer of the ribosyl-5-phosphate group from 5-phospho-alpha-D-ribose 1-diphosphate (PRPP) to the N9 position of the 6-oxopurines hypoxanthine and guanine to form the corresponding ribonucleotides IMP (inosine 5'-monophosphate) and GMP (guanosine 5'-monophosphate), with the release of PPi. In Bacillus subtilis (strain 168), this protein is Hypoxanthine-guanine phosphoribosyltransferase (hprT).